Reading from the N-terminus, the 91-residue chain is Small ribosomal subunit protein uS19 (91 aa).

Belongs to the universal ribosomal protein uS19 family.

Functionally, protein S19 forms a complex with S13 that binds strongly to the 16S ribosomal RNA. In Lachnospira eligens (strain ATCC 27750 / DSM 3376 / VPI C15-48 / C15-B4) (Eubacterium eligens), this protein is Small ribosomal subunit protein uS19.